The primary structure comprises 494 residues: Glycerol kinase (494 aa).

Residue Thr13 participates in ADP binding. The ATP site is built by Thr13, Thr14, and Ser15. Thr13 provides a ligand contact to sn-glycerol 3-phosphate. Position 17 (Arg17) interacts with ADP. Residues Arg83, Glu84, Tyr135, and Asp244 each contribute to the sn-glycerol 3-phosphate site. 5 residues coordinate glycerol: Arg83, Glu84, Tyr135, Asp244, and Gln245. The ADP site is built by Thr266 and Gly309. ATP is bound by residues Thr266, Gly309, Gln313, and Gly410. ADP-binding residues include Gly410 and Asn414.

The protein belongs to the FGGY kinase family.

It catalyses the reaction glycerol + ATP = sn-glycerol 3-phosphate + ADP + H(+). It participates in polyol metabolism; glycerol degradation via glycerol kinase pathway; sn-glycerol 3-phosphate from glycerol: step 1/1. With respect to regulation, inhibited by fructose 1,6-bisphosphate (FBP). Key enzyme in the regulation of glycerol uptake and metabolism. Catalyzes the phosphorylation of glycerol to yield sn-glycerol 3-phosphate. In Shewanella sp. (strain MR-4), this protein is Glycerol kinase.